The sequence spans 470 residues: Auxin transporter-like protein 3 (470 aa).

Topologically, residues 1–57 (MAAEKIETVVAGNYLEMEREEENISGNKKSSTKTKLSNFFWHGGSVYDAWFSCASNQ) are cytoplasmic. Residues 58-75 (VAQVLLTLPYSFSQLGMM) form a helical membrane-spanning segment. At 76–77 (SG) the chain is on the extracellular side. A helical transmembrane segment spans residues 78 to 98 (ILFQLFYGLMGSWTAYLISVL). Topologically, residues 99–134 (YVEYRTRKEREKFDFRNHVIQWFEVLDGLLGKHWRN) are cytoplasmic. Residues 135–155 (LGLIFNCTFLLFGSVIQLIAC) form a helical membrane-spanning segment. Topologically, residues 156-170 (ASNIYYINDKLDKRT) are extracellular. A helical transmembrane segment spans residues 171–191 (WTYIFGACCATTVFIPSFHNY). Residue Arg-192 is a topological domain, cytoplasmic. The helical transmembrane segment at 193–213 (IWSFLGLAMTTYTSWYLTIAS) threads the bilayer. The Extracellular portion of the chain corresponds to 214 to 230 (LLHGQAEDVKHSGPTTM). The helical transmembrane segment at 231–251 (VLYFTGATNILYTFGGHAVTV) threads the bilayer. Residues 252-264 (EIMHAMWKPQKFK) are Cytoplasmic-facing. The chain crosses the membrane as a helical span at residues 265-285 (AIYLLATIYVLTLTLPSASAV). The Extracellular segment spans residues 286–312 (YWAFGDKLLTHSNALSLLPKTGFRDTA). A helical membrane pass occupies residues 313–333 (VILMLIHQFITFGFASTPLYF). Residues 334–354 (VWEKLIGVHETKSMFKRAMAR) are Cytoplasmic-facing. Residues 355–375 (LPVVVPIWFLAIIFPFFGPIN) form a helical membrane-spanning segment. A topological domain (extracellular) is located at residue Ser-376. The helical transmembrane segment at 377-397 (AVGSLLVSFTVYIIPALAHML) threads the bilayer. Residues 398–426 (TFAPAPSRENAVERPPRVVGGWMGTYCIN) are Cytoplasmic-facing. Residues 427–447 (IFVVVWVFVVGFGFGGWASMV) form a helical membrane-spanning segment. Topologically, residues 448 to 470 (NFVRQIDTFGLFTKCYQCPPHKP) are extracellular.

Belongs to the amino acid/polyamine transporter 2 family. Amino acid/auxin permease (AAAP) (TC 2.A.18.1) subfamily.

Its subcellular location is the cell membrane. Its function is as follows. Carrier protein involved in proton-driven auxin influx. Mediates the formation of auxin gradient from developing leaves (site of auxin biosynthesis) to tips by contributing to the loading of auxin in vascular tissues and facilitating acropetal (base to tip) auxin transport within inner tissues of the root apex, and basipetal (tip to base) auxin transport within outer tissues of the root apex. The chain is Auxin transporter-like protein 3 (LAX3) from Arabidopsis thaliana (Mouse-ear cress).